Here is a 1039-residue protein sequence, read N- to C-terminus: FHIP family protein GG24907 (1039 aa).

Phosphoserine is present on residues S498 and S805. Disordered stretches follow at residues 831–877, 904–945, and 957–984; these read ATPT…SASS, GISQ…SNSS, and SNTT…SEPA. 2 stretches are compositionally biased toward polar residues: residues 855–877 and 904–924; these read TSMF…SASS and GISQ…TQPQ. Residues 925–945 show a composition bias toward low complexity; it reads AGASRTGATATSAAASGSNSS. The segment covering 957–966 has biased composition (polar residues); sequence SNTTTHSAST.

Belongs to the FHIP family.

In Drosophila erecta (Fruit fly), this protein is FHIP family protein GG24907.